Consider the following 335-residue polypeptide: Dihydroorotate dehydrogenase (quinone) (335 aa).

FMN is bound by residues 59–63 and T83; that span reads AGLDK. A substrate-binding site is contributed by K63. 108 to 112 serves as a coordination point for substrate; sequence NRMGF. The FMN site is built by N136 and N169. N169 provides a ligand contact to substrate. S172 (nucleophile) is an active-site residue. Position 174 (N174) interacts with substrate. 2 residues coordinate FMN: K214 and T242. 243–244 is a substrate binding site; sequence NT. FMN is bound by residues G265, G294, and 315–316; that span reads YS.

The protein belongs to the dihydroorotate dehydrogenase family. Type 2 subfamily. In terms of assembly, monomer. It depends on FMN as a cofactor.

The protein resides in the cell membrane. The enzyme catalyses (S)-dihydroorotate + a quinone = orotate + a quinol. It functions in the pathway pyrimidine metabolism; UMP biosynthesis via de novo pathway; orotate from (S)-dihydroorotate (quinone route): step 1/1. Catalyzes the conversion of dihydroorotate to orotate with quinone as electron acceptor. The chain is Dihydroorotate dehydrogenase (quinone) from Neisseria meningitidis serogroup A / serotype 4A (strain DSM 15465 / Z2491).